Reading from the N-terminus, the 377-residue chain is Histone deacetylase 8 (377 aa).

The segment at 14-324 (LPPVYIYSPE…WTYLTGVILG (311 aa)) is histone deacetylase. Residue Ser39 is modified to Phosphoserine. Position 101 (Asp101) interacts with substrate. His143 acts as the Proton acceptor in catalysis. Residue Gly151 participates in substrate binding. A divalent metal cation-binding residues include Asp178, His180, and Asp267. A substrate-binding site is contributed by Tyr306.

This sequence belongs to the histone deacetylase family. HD type 1 subfamily. Interacts with CBFA2T3. Interacts with phosphorylated SMG5/EST1B; this interaction protects SMG5 from ubiquitin-mediated degradation. Associates with alpha-SMA (smooth muscle alpha-actin). Requires a divalent metal cation as cofactor. Post-translationally, phosphorylated by PKA on serine 39. Phosphorylation reduces deacetylase activity observed preferentially on histones H3 and H4.

It is found in the nucleus. The protein resides in the chromosome. The protein localises to the cytoplasm. The catalysed reaction is N(6)-acetyl-L-lysyl-[histone] + H2O = L-lysyl-[histone] + acetate. The enzyme catalyses N(6)-acetyl-L-lysyl-[protein] + H2O = L-lysyl-[protein] + acetate. It carries out the reaction N(6)-(2E)-butenoyl-L-lysyl-[protein] + H2O = (2E)-2-butenoate + L-lysyl-[protein]. Its activity is regulated as follows. Its activity is inhibited by trichostatin A (TSA) and butyrate, 2 well known histone deacetylase inhibitors. In terms of biological role, histone deacetylase that catalyzes the deacetylation of lysine residues on the N-terminal part of the core histones (H2A, H2B, H3 and H4). Histone deacetylation gives a tag for epigenetic repression and plays an important role in transcriptional regulation, cell cycle progression and developmental events. Histone deacetylases act via the formation of large multiprotein complexes. Also involved in the deacetylation of cohesin complex protein SMC3 regulating release of cohesin complexes from chromatin. May play a role in smooth muscle cell contractility. In addition to protein deacetylase activity, also has protein-lysine deacylase activity: acts as a protein decrotonylase by mediating decrotonylation ((2E)-butenoyl) of histones. This chain is Histone deacetylase 8 (HDAC8), found in Bos taurus (Bovine).